Here is a 153-residue protein sequence, read N- to C-terminus: UPF0756 membrane protein LSL_0936 (153 aa).

5 consecutive transmembrane segments (helical) span residues 4–24, 26–46, 51–71, 86–106, and 116–136; these read WIFLGLILLIAYLGKNSSLLI, GAVVIVIKLFPFLSQKLYPVI, INWGVTIISVAILIPIATGQI, WIAVVCGILVAILSKHGVNLL, and LVIGTIIGVVFLKGVAAGPVI.

It belongs to the UPF0756 family.

It localises to the cell membrane. This is UPF0756 membrane protein LSL_0936 from Ligilactobacillus salivarius (strain UCC118) (Lactobacillus salivarius).